The following is a 225-amino-acid chain: Esterase OVCA2 (225 aa).

Active-site charge relay system residues include S119, D177, and H204.

It belongs to the LovG family. In terms of tissue distribution, strongly expressed in kidney and liver. Moderately expressed in brain, skin and testis. Weakly expressed in heart, lung, small intestine, spleen, stomach and thymus.

The catalysed reaction is a carboxylic ester + H2O = an alcohol + a carboxylate + H(+). Exhibits ester hydrolase activity with a strong preference for long-chain alkyl ester substrates and high selectivity against a variety of short, branched, and substituted esters. Is able to hydrolyze ester bonds within a wide range of p-nitrophenyl derivatives (C2-C14) in vitro, with a strong preference toward substrates of &gt;8 carbons. This is Esterase OVCA2 (Ovca2) from Mus musculus (Mouse).